The following is a 476-amino-acid chain: MASPFSGALQLTDLDDFIAPSQDCIKPMKVDRRPGSGVAKIHIEDDGSYFQVSQDGGMKKLEKAKISLDDCLACSGCVTSAETVLITQQSHEELRKVLGANKTAAPDQQKLVVISVSPQSRASLAVRFQLNPTDTARKLTAFFKKIGAHYVFDTAFSRNFSLLESQREFVRRFRGQADPEQALPVLTSACPGWICYAEKTHGSTLLPHISTARSPQQVMGSLVKDFFAQQQHLTPDKVYHATVMPCYDKKLEASRPDFFSQEHQTRDVDCVITTGEVFKLLEEEGVSLSELEPAPLDSLCSSASAQEPTSHQGGGSGGYLEHVFRHAAQELFGIHVTEVTYRPLRNKDLQEVILEREGQVLLHFAAAYGFRNIQNLVQKLKRGRCPYHYVEVMACPAGCLNGGGQLKAPDMPGKELLQQVERLYGLVRTEAPEDAPGIQELYERWLQGAGSERAGRLLHTSYHAVEKAGSGLSIRW.

The residue at position 2 (Ala-2) is an N-acetylalanine. 8 residues coordinate [4Fe-4S] cluster: Cys-24, Cys-71, Cys-74, Cys-77, Cys-190, Cys-246, Cys-395, and Cys-399.

This sequence belongs to the NARF family. As to quaternary structure, external component of the CIA complex. In the CIA complex, interacts directly with CIAO1 and MMS19.

Functionally, component of the cytosolic iron-sulfur protein assembly (CIA) complex, a multiprotein complex that mediates the incorporation of iron-sulfur cluster into extramitochondrial Fe/S proteins. Seems to negatively regulate the level of HIF1A expression, although this effect could be indirect. This chain is Cytosolic iron-sulfur assembly component 3, found in Bos taurus (Bovine).